Consider the following 131-residue polypeptide: Fumarate reductase subunit C (131 aa).

A run of 3 helical transmembrane segments spans residues 30–50, 57–77, and 109–129; these read EGTA…LFAL, WMGF…LIAL, and IIKG…YVAL.

Belongs to the FrdC family. In terms of assembly, part of an enzyme complex containing four subunits: a flavoprotein (FrdA), an iron-sulfur protein (FrdB), and two hydrophobic anchor proteins (FrdC and FrdD).

It localises to the cell inner membrane. Two distinct, membrane-bound, FAD-containing enzymes are responsible for the catalysis of fumarate and succinate interconversion; fumarate reductase is used in anaerobic growth, and succinate dehydrogenase is used in aerobic growth. Anchors the catalytic components of the fumarate reductase complex to the cell inner membrane, binds quinones. This is Fumarate reductase subunit C from Citrobacter koseri (strain ATCC BAA-895 / CDC 4225-83 / SGSC4696).